A 383-amino-acid polypeptide reads, in one-letter code: Acetylornithine deacetylase (383 aa).

His-80 provides a ligand contact to Zn(2+). Asp-82 is an active-site residue. Residue Asp-112 coordinates Zn(2+). The active site involves Glu-144. Residues Glu-145, Glu-169, and His-355 each coordinate Zn(2+).

The protein belongs to the peptidase M20A family. ArgE subfamily. Homodimer. It depends on Zn(2+) as a cofactor. The cofactor is Co(2+). Glutathione serves as cofactor.

Its subcellular location is the cytoplasm. It catalyses the reaction N(2)-acetyl-L-ornithine + H2O = L-ornithine + acetate. It participates in amino-acid biosynthesis; L-arginine biosynthesis; L-ornithine from N(2)-acetyl-L-ornithine (linear): step 1/1. Catalyzes the hydrolysis of the amide bond of N(2)-acetylated L-amino acids. Cleaves the acetyl group from N-acetyl-L-ornithine to form L-ornithine, an intermediate in L-arginine biosynthesis pathway, and a branchpoint in the synthesis of polyamines. The polypeptide is Acetylornithine deacetylase (Pectobacterium atrosepticum (strain SCRI 1043 / ATCC BAA-672) (Erwinia carotovora subsp. atroseptica)).